A 185-amino-acid chain; its full sequence is ATP synthase subunit b, chloroplastic (185 aa).

Residues 27–49 (LATNPINLSVVLGVLIFFGKGVL) form a helical membrane-spanning segment.

This sequence belongs to the ATPase B chain family. As to quaternary structure, F-type ATPases have 2 components, F(1) - the catalytic core - and F(0) - the membrane proton channel. F(1) has five subunits: alpha(3), beta(3), gamma(1), delta(1), epsilon(1). F(0) has four main subunits: a(1), b(1), b'(1) and c(10-14). The alpha and beta chains form an alternating ring which encloses part of the gamma chain. F(1) is attached to F(0) by a central stalk formed by the gamma and epsilon chains, while a peripheral stalk is formed by the delta, b and b' chains.

It localises to the plastid. It is found in the chloroplast thylakoid membrane. Its function is as follows. F(1)F(0) ATP synthase produces ATP from ADP in the presence of a proton or sodium gradient. F-type ATPases consist of two structural domains, F(1) containing the extramembraneous catalytic core and F(0) containing the membrane proton channel, linked together by a central stalk and a peripheral stalk. During catalysis, ATP synthesis in the catalytic domain of F(1) is coupled via a rotary mechanism of the central stalk subunits to proton translocation. Functionally, component of the F(0) channel, it forms part of the peripheral stalk, linking F(1) to F(0). This Vitis vinifera (Grape) protein is ATP synthase subunit b, chloroplastic.